Here is a 516-residue protein sequence, read N- to C-terminus: Golgi-associated kinase 1B (516 aa).

The Cytoplasmic segment spans residues 1 to 37 (MTCPDKLGQLINWFVCSLCAPRVCKLWSSRRPRTRRN). Residues 38-55 (LLLGTACAIYLGFLVSQV) traverse the membrane as a helical; Signal-anchor for type II membrane protein segment. At 56 to 516 (GKGSFQHGQA…HGARVLPMNE (461 aa)) the chain is on the extracellular side. The N-linked (GlcNAc...) asparagine glycan is linked to N286.

It belongs to the GASK family.

It localises to the golgi apparatus membrane. This is Golgi-associated kinase 1B from Rattus norvegicus (Rat).